A 50-amino-acid polypeptide reads, in one-letter code: PsaJ-like protein asl3190 (50 aa).

The helical transmembrane segment at 21-41 (VLAVISISVAFSTWAIFNYIF) threads the bilayer.

The protein belongs to the PsaJ family.

It is found in the cellular thylakoid membrane. In Nostoc sp. (strain PCC 7120 / SAG 25.82 / UTEX 2576), this protein is PsaJ-like protein asl3190.